Consider the following 460-residue polypeptide: uncharacterized protein (460 aa).

Residues 5–63 enclose the TRAM domain; sequence TWHQGELIEVAIADLSDTGDGVGRFAERVVFVPDTVPGDRVLVRLLHVKPNYAHGKLHQ. 4 residues coordinate [4Fe-4S] cluster: Cys76, Cys82, Cys85, and Cys164. Positions 288, 317, 338, and 383 each coordinate S-adenosyl-L-methionine. Cys410 serves as the catalytic Nucleophile.

Belongs to the class I-like SAM-binding methyltransferase superfamily. RNA M5U methyltransferase family.

This is an uncharacterized protein from Nostoc sp. (strain PCC 7120 / SAG 25.82 / UTEX 2576).